The primary structure comprises 277 residues: Phosphatidylglycerol--prolipoprotein diacylglyceryl transferase (277 aa).

3 helical membrane-spanning segments follow: residues 17–37 (LAIH…MLLG), 63–83 (ILFL…CLFY), and 101–121 (GGMA…WFAH). Arg146 provides a ligand contact to a 1,2-diacyl-sn-glycero-3-phospho-(1'-sn-glycerol). The next 3 membrane-spanning stretches (helical) occupy residues 182–202 (SQVY…WLYA), 209–229 (GQVA…AEQF), and 234–254 (AFLG…LPMI).

Belongs to the Lgt family.

It localises to the cell inner membrane. The catalysed reaction is L-cysteinyl-[prolipoprotein] + a 1,2-diacyl-sn-glycero-3-phospho-(1'-sn-glycerol) = an S-1,2-diacyl-sn-glyceryl-L-cysteinyl-[prolipoprotein] + sn-glycerol 1-phosphate + H(+). Its pathway is protein modification; lipoprotein biosynthesis (diacylglyceryl transfer). In terms of biological role, catalyzes the transfer of the diacylglyceryl group from phosphatidylglycerol to the sulfhydryl group of the N-terminal cysteine of a prolipoprotein, the first step in the formation of mature lipoproteins. The chain is Phosphatidylglycerol--prolipoprotein diacylglyceryl transferase from Verminephrobacter eiseniae (strain EF01-2).